The sequence spans 262 residues: Dimeric xanthone biosynthesis cluster protein R11 (262 aa).

Residues 69–160 (IADLLFYTKT…PQLFKHLNDE (92 aa)) form a hemerythrin-like region.

It participates in secondary metabolite biosynthesis. Functionally, part of the gene cluster that mediates the biosynthesis of the dimeric xanthones cryptosporioptides. The pathway begins with the synthesis of atrochrysone thioester by the polyketide synthase dmx-nrPKS. The atrochrysone carboxyl ACP thioesterase dmxR1 then breaks the thioester bond and releases the atrochrysone carboxylic acid from dmx-nrPKS. Atrochrysone carboxylic acid is decarboxylated by the decarboxylase dmxR15, and oxidized by the anthrone oxygenase dmxR16 to yield emodin. Emodin is then reduced to emodin hydroquinone by the oxidoreductase dmxR7. A-ring reduction by the short chain dehydrogenase dmxR18, dehydration by the scytalone dehydratase-like protein dmxR17 and probable spontaneous re-oxidation, results in overall deoxygenation to chrysophanol. Baeyer-Villiger oxidation by the Baeyer-Villiger monooxygenase (BVMO) dmxR6 then yields monodictylactone in equilibrium with monodictyphenone. In the case of the cryptosporioptides biosynthesis, monodictylactone is reduced at C-12 to an alcohol (by the short chain dehydrogenases dmxR12 or dmxR8) and hydroxylated at C-5 by dmxR9, yielding the electron-rich aromatic which could eliminate H(2)O to form the ortho-quinonemethide, followed by tautomerisation to paraquinone and complete the formal reduction to produce the 10-methylgroup. Conjugate addition of C-4a-OH to the resulting paraquinone by the monooxygenase dmxR10 then gives cyclohexadienone, which is then reduced at C-5 by the short chain dehydrogenase dmxR3 to give the dihydroxanthone. The 6,7-epoxide in the cryptosporioptides could be introduced by the cytochrome P450 monooxygenase dmxL3. The highly reducing PKS dmxL2 manufactures butyrate, which is further carboxylated by dmxL1 to form ethylmalonate. It is not yet clear whether the carboxylation occurs while the butyrate is attached to the ACP of dmxL2, but this unusual fungal metabolite could then be esterified to O-5 by the O-acetyltransferase dmxR13. Finally, dimerization performed by dmxR5 gives the observed dimers cryptosporioptides A, B and C as the final products of the pathway. The chain is Dimeric xanthone biosynthesis cluster protein R11 from Cryptosporiopsis sp. (strain 8999).